The primary structure comprises 218 residues: Adenylate kinase (218 aa).

10 to 15 provides a ligand contact to ATP; that stretch reads GAGKGT. Residues 30–59 form an NMP region; it reads STGDMLRAAVKAGTPLGQQAKAVMDAGQLV. AMP-binding positions include Thr31, Arg36, 57–59, 85–88, and Gln92; these read QLV and GFPR. Positions 122–159 are LID; sequence GRRSHPASGRTYHVKFNPPKVEGQDDVTGEPLVQREDD. ATP contacts are provided by residues Arg123 and 132 to 133; that span reads TY. The tract at residues 127–151 is disordered; that stretch reads PASGRTYHVKFNPPKVEGQDDVTGE. 2 residues coordinate AMP: Arg156 and Arg167. Gly203 contacts ATP.

Belongs to the adenylate kinase family. As to quaternary structure, monomer.

The protein localises to the cytoplasm. It catalyses the reaction AMP + ATP = 2 ADP. It functions in the pathway purine metabolism; AMP biosynthesis via salvage pathway; AMP from ADP: step 1/1. Its function is as follows. Catalyzes the reversible transfer of the terminal phosphate group between ATP and AMP. Plays an important role in cellular energy homeostasis and in adenine nucleotide metabolism. This Delftia acidovorans (strain DSM 14801 / SPH-1) protein is Adenylate kinase.